The following is a 279-amino-acid chain: Putative pyruvate, phosphate dikinase regulatory protein (279 aa).

Residue 156–163 participates in ADP binding; it reads GISRVGKT.

This sequence belongs to the pyruvate, phosphate/water dikinase regulatory protein family. PDRP subfamily.

The enzyme catalyses N(tele)-phospho-L-histidyl/L-threonyl-[pyruvate, phosphate dikinase] + ADP = N(tele)-phospho-L-histidyl/O-phospho-L-threonyl-[pyruvate, phosphate dikinase] + AMP + H(+). It catalyses the reaction N(tele)-phospho-L-histidyl/O-phospho-L-threonyl-[pyruvate, phosphate dikinase] + phosphate + H(+) = N(tele)-phospho-L-histidyl/L-threonyl-[pyruvate, phosphate dikinase] + diphosphate. Its function is as follows. Bifunctional serine/threonine kinase and phosphorylase involved in the regulation of the pyruvate, phosphate dikinase (PPDK) by catalyzing its phosphorylation/dephosphorylation. This Chloroflexus aurantiacus (strain ATCC 29366 / DSM 635 / J-10-fl) protein is Putative pyruvate, phosphate dikinase regulatory protein.